A 226-amino-acid polypeptide reads, in one-letter code: V-type proton ATPase subunit E 2 (226 aa).

Belongs to the V-ATPase E subunit family. In terms of assembly, V-ATPase is a heteromultimeric enzyme made up of two complexes: the ATP-hydrolytic V1 complex and the proton translocation V0 complex. The V1 complex consists of three catalytic AB heterodimers that form a heterohexamer, three peripheral stalks each consisting of EG heterodimers, one central rotor including subunits D and F, and the regulatory subunits C and H. The proton translocation complex V0 consists of the proton transport subunit a, a ring of proteolipid subunits c9c'', rotary subunit d, subunits e and f, and the accessory subunits ATP6AP1/Ac45 and ATP6AP2/PRR. Testis specific.

In terms of biological role, subunit of the V1 complex of vacuolar(H+)-ATPase (V-ATPase), a multisubunit enzyme composed of a peripheral complex (V1) that hydrolyzes ATP and a membrane integral complex (V0) that translocates protons. V-ATPase is responsible for acidifying and maintaining the pH of intracellular compartments and in some cell types, is targeted to the plasma membrane, where it is responsible for acidifying the extracellular environment. This chain is V-type proton ATPase subunit E 2 (Atp6v1e2), found in Mus musculus (Mouse).